Consider the following 208-residue polypeptide: ATP-dependent Clp protease proteolytic subunit (208 aa).

Ser-105 acts as the Nucleophile in catalysis. Residue His-130 is part of the active site.

It belongs to the peptidase S14 family. In terms of assembly, fourteen ClpP subunits assemble into 2 heptameric rings which stack back to back to give a disk-like structure with a central cavity, resembling the structure of eukaryotic proteasomes.

The protein localises to the cytoplasm. The catalysed reaction is Hydrolysis of proteins to small peptides in the presence of ATP and magnesium. alpha-casein is the usual test substrate. In the absence of ATP, only oligopeptides shorter than five residues are hydrolyzed (such as succinyl-Leu-Tyr-|-NHMec, and Leu-Tyr-Leu-|-Tyr-Trp, in which cleavage of the -Tyr-|-Leu- and -Tyr-|-Trp bonds also occurs).. Cleaves peptides in various proteins in a process that requires ATP hydrolysis. Has a chymotrypsin-like activity. Plays a major role in the degradation of misfolded proteins. This Xylella fastidiosa (strain M23) protein is ATP-dependent Clp protease proteolytic subunit.